Reading from the N-terminus, the 21-residue chain is Complement receptor 3-related protein (21 aa).

It localises to the secreted. Functionally, plays a role in adherence of C.albicans to buccal epithelial cells, and in biofilm formation. The sequence is that of Complement receptor 3-related protein from Candida albicans (Yeast).